Reading from the N-terminus, the 343-residue chain is WAT1-related protein At1g43650 (343 aa).

A run of 10 helical transmembrane segments spans residues 9–29 (MAMV…KVAI), 36–56 (FVFV…FAFF), 65–85 (LSFI…TLSL), 98–118 (TFAA…ALLF), 130–150 (GVAK…FAFV), 175–195 (SVKG…WIIM), 209–229 (LVAL…VAVN), 239–259 (FGLP…LTYW), 272–292 (FTAL…SFLF), and 296–316 (FYLG…LGLW). EamA domains follow at residues 16–139 (IVYA…GSMV) and 188–313 (CWCL…GLYL).

This sequence belongs to the drug/metabolite transporter (DMT) superfamily. Plant drug/metabolite exporter (P-DME) (TC 2.A.7.4) family.

The protein localises to the membrane. The chain is WAT1-related protein At1g43650 from Arabidopsis thaliana (Mouse-ear cress).